The primary structure comprises 324 residues: Beta-ketoacyl-[acyl-carrier-protein] synthase III (324 aa).

Catalysis depends on residues Cys-112 and His-249. Residues 250-254 are ACP-binding; sequence QANRR. Asn-279 is a catalytic residue.

The protein belongs to the thiolase-like superfamily. FabH family. As to quaternary structure, homodimer.

The protein localises to the cytoplasm. It carries out the reaction malonyl-[ACP] + acetyl-CoA + H(+) = 3-oxobutanoyl-[ACP] + CO2 + CoA. The protein operates within lipid metabolism; fatty acid biosynthesis. Functionally, catalyzes the condensation reaction of fatty acid synthesis by the addition to an acyl acceptor of two carbons from malonyl-ACP. Catalyzes the first condensation reaction which initiates fatty acid synthesis and may therefore play a role in governing the total rate of fatty acid production. Possesses both acetoacetyl-ACP synthase and acetyl transacylase activities. Its substrate specificity determines the biosynthesis of branched-chain and/or straight-chain of fatty acids. The sequence is that of Beta-ketoacyl-[acyl-carrier-protein] synthase III from Streptococcus pyogenes serotype M49 (strain NZ131).